We begin with the raw amino-acid sequence, 166 residues long: Sperm-egg fusion protein TMEM95 (166 aa).

The first 16 residues, Met1–Ala16, serve as a signal peptide directing secretion. 4 disulfide bridges follow: Cys17/Cys118, Cys20/Cys121, Cys105/Cys128, and Cys109/Cys134. Residues Cys17–Arg145 are Extracellular-facing. Residue Asn117 is glycosylated (N-linked (GlcNAc...) asparagine). A helical membrane pass occupies residues Ile146 to Val165. Position 166 (Glu166) is a topological domain, cytoplasmic.

It belongs to the TMEM95 family. In terms of assembly, does not interact with sperm-egg fusion proteins IZUMO1 or IZUMO1R/JUNO. Post-translationally, N-glycosylated. Detected in testis and brain with higher levels in brain than testis.

The protein localises to the cytoplasmic vesicle. Its subcellular location is the secretory vesicle. It is found in the acrosome membrane. Sperm protein required for fusion of sperm with the egg membrane during fertilization. The chain is Sperm-egg fusion protein TMEM95 from Bos taurus (Bovine).